The sequence spans 308 residues: Methionyl-tRNA formyltransferase (308 aa).

110-113 (SLLP) lines the (6S)-5,6,7,8-tetrahydrofolate pocket.

It belongs to the Fmt family.

It catalyses the reaction L-methionyl-tRNA(fMet) + (6R)-10-formyltetrahydrofolate = N-formyl-L-methionyl-tRNA(fMet) + (6S)-5,6,7,8-tetrahydrofolate + H(+). In terms of biological role, attaches a formyl group to the free amino group of methionyl-tRNA(fMet). The formyl group appears to play a dual role in the initiator identity of N-formylmethionyl-tRNA by promoting its recognition by IF2 and preventing the misappropriation of this tRNA by the elongation apparatus. This Neisseria meningitidis serogroup A / serotype 4A (strain DSM 15465 / Z2491) protein is Methionyl-tRNA formyltransferase.